Consider the following 198-residue polypeptide: Recombination protein RecR (198 aa).

The C4-type zinc finger occupies 58-73 (CSVCGNFTDKDPCAIC). The Toprim domain occupies 81-175 (NTICVVEHPK…KVTRIAHGIP (95 aa)).

This sequence belongs to the RecR family.

May play a role in DNA repair. It seems to be involved in an RecBC-independent recombinational process of DNA repair. It may act with RecF and RecO. This chain is Recombination protein RecR, found in Clostridium tetani (strain Massachusetts / E88).